Reading from the N-terminus, the 430-residue chain is Dihydrofolate synthase/folylpolyglutamate synthase (430 aa).

51–54 (GKGS) serves as a coordination point for ATP. Mg(2+) is bound at residue serine 75. 114–117 (TEYG) provides a ligand contact to 7,8-dihydropteroate. Glutamate 145 contributes to the Mg(2+) binding site. 152 to 154 (FDS) is a 7,8-dihydropteroate binding site. Position 172 (histidine 172) interacts with Mg(2+). Residues glutamine 263, arginine 302, and aspartate 315 each contribute to the ATP site.

Belongs to the folylpolyglutamate synthase family. As to quaternary structure, monomer. Mg(2+) is required as a cofactor.

It catalyses the reaction 7,8-dihydropteroate + L-glutamate + ATP = 7,8-dihydrofolate + ADP + phosphate + H(+). It carries out the reaction (6S)-5,6,7,8-tetrahydrofolyl-(gamma-L-Glu)(n) + L-glutamate + ATP = (6S)-5,6,7,8-tetrahydrofolyl-(gamma-L-Glu)(n+1) + ADP + phosphate + H(+). It functions in the pathway cofactor biosynthesis; tetrahydrofolate biosynthesis; 7,8-dihydrofolate from 2-amino-4-hydroxy-6-hydroxymethyl-7,8-dihydropteridine diphosphate and 4-aminobenzoate: step 2/2. It participates in cofactor biosynthesis; tetrahydrofolylpolyglutamate biosynthesis. Its function is as follows. Functions in two distinct reactions of the de novo folate biosynthetic pathway. Catalyzes the addition of a glutamate residue to dihydropteroate (7,8-dihydropteroate or H2Pte) to form dihydrofolate (7,8-dihydrofolate monoglutamate or H2Pte-Glu). Also catalyzes successive additions of L-glutamate to tetrahydrofolate, leading to folylpolyglutamate derivatives. The sequence is that of Dihydrofolate synthase/folylpolyglutamate synthase (folC) from Bacillus subtilis (strain 168).